The primary structure comprises 157 residues: Large ribosomal subunit protein bL17 (157 aa).

A disordered region spans residues 124 to 157 (AAPVVSKQDRAKRVKGSKKAESRSQENEGGDAAE).

Belongs to the bacterial ribosomal protein bL17 family. As to quaternary structure, part of the 50S ribosomal subunit. Contacts protein L32.

The sequence is that of Large ribosomal subunit protein bL17 from Chlorobaculum tepidum (strain ATCC 49652 / DSM 12025 / NBRC 103806 / TLS) (Chlorobium tepidum).